The primary structure comprises 310 residues: Lipoyl synthase (310 aa).

Residues Cys-61, Cys-66, Cys-72, Cys-87, Cys-91, Cys-94, and Ser-300 each coordinate [4Fe-4S] cluster. The Radical SAM core domain maps to 73–289 (FNNGTATFMI…EYIALSLGFS (217 aa)).

Belongs to the radical SAM superfamily. Lipoyl synthase family. [4Fe-4S] cluster is required as a cofactor.

It is found in the cytoplasm. The catalysed reaction is [[Fe-S] cluster scaffold protein carrying a second [4Fe-4S](2+) cluster] + N(6)-octanoyl-L-lysyl-[protein] + 2 oxidized [2Fe-2S]-[ferredoxin] + 2 S-adenosyl-L-methionine + 4 H(+) = [[Fe-S] cluster scaffold protein] + N(6)-[(R)-dihydrolipoyl]-L-lysyl-[protein] + 4 Fe(3+) + 2 hydrogen sulfide + 2 5'-deoxyadenosine + 2 L-methionine + 2 reduced [2Fe-2S]-[ferredoxin]. The protein operates within protein modification; protein lipoylation via endogenous pathway; protein N(6)-(lipoyl)lysine from octanoyl-[acyl-carrier-protein]: step 2/2. In terms of biological role, catalyzes the radical-mediated insertion of two sulfur atoms into the C-6 and C-8 positions of the octanoyl moiety bound to the lipoyl domains of lipoate-dependent enzymes, thereby converting the octanoylated domains into lipoylated derivatives. The chain is Lipoyl synthase from Buchnera aphidicola subsp. Cinara cedri (strain Cc).